A 331-amino-acid chain; its full sequence is Fructose-1,6-bisphosphatase class 1 (331 aa).

Positions 80, 98, 100, and 101 each coordinate Mg(2+). Substrate-binding positions include 101–104 and Asn-189; that span reads DGSS. Glu-261 is a Mg(2+) binding site.

This sequence belongs to the FBPase class 1 family. In terms of assembly, homotetramer. Mg(2+) is required as a cofactor.

The protein localises to the cytoplasm. It carries out the reaction beta-D-fructose 1,6-bisphosphate + H2O = beta-D-fructose 6-phosphate + phosphate. The protein operates within carbohydrate biosynthesis; gluconeogenesis. The polypeptide is Fructose-1,6-bisphosphatase class 1 (Rhodobacter capsulatus (strain ATCC BAA-309 / NBRC 16581 / SB1003)).